Here is a 177-residue protein sequence, read N- to C-terminus: Large ribosomal subunit protein uL6 (177 aa).

The protein belongs to the universal ribosomal protein uL6 family. As to quaternary structure, part of the 50S ribosomal subunit.

Its function is as follows. This protein binds to the 23S rRNA, and is important in its secondary structure. It is located near the subunit interface in the base of the L7/L12 stalk, and near the tRNA binding site of the peptidyltransferase center. This chain is Large ribosomal subunit protein uL6, found in Vibrio campbellii (strain ATCC BAA-1116).